Reading from the N-terminus, the 416-residue chain is Thyroid hormone receptor alpha (416 aa).

The interval 1 to 30 (MEPISNVEDPNSSEGDEKRWPDGPKRKRKN) is disordered. The tract at residues 1–58 (MEPISNVEDPNSSEGDEKRWPDGPKRKRKNSTCSVKSMSALSLSVQGYIPSYLEKDEP) is modulating. Over residues 15-24 (GDEKRWPDGP) the composition is skewed to basic and acidic residues. Cys-59, Cys-62, Cys-76, Cys-79, Cys-97, Cys-103, Cys-113, and Cys-116 together coordinate Zn(2+). 2 consecutive NR C4-type zinc fingers follow at residues 59-79 (CVVC…CEGC) and 97-121 (CKYD…FRKC). The segment at residues 59-133 (CVVCGDKATG…VCMAMDLVLD (75 aa)) is a DNA-binding region (nuclear receptor). The NR LBD domain occupies 169 to 413 (SEWELIRHVT…PPLFLEVFED (245 aa)). Arg-234 and Ser-283 together coordinate 3,3',5-triiodo-L-thyronine.

It belongs to the nuclear hormone receptor family. NR1 subfamily.

The protein resides in the nucleus. In terms of biological role, nuclear hormone receptor that can act as a repressor or activator of transcription. High affinity receptor for thyroid hormones, including triiodothyronine and thyroxine. The chain is Thyroid hormone receptor alpha (thra1) from Salmo salar (Atlantic salmon).